A 343-amino-acid polypeptide reads, in one-letter code: Coiled-coil domain-containing protein 97 (343 aa).

Methionine 1 carries the N-acetylmethionine modification. The tract at residues 1-37 is disordered; sequence MEAVATATAAKEPDKGCIEPGPGHWGELSRTPVPSKP. Threonine 47 is subject to Phosphothreonine. Disordered regions lie at residues 200–220, 234–277, and 292–343; these read ARTP…ACPL, QQRL…DSEE, and RFLD…LDGD. Residues 224–262 are a coiled coil; the sequence is LLQSYEERELQQRLLQQQEEEEACLEEEEEEEDSDEEDQ. A compositionally biased stretch (acidic residues) spans 241–261; sequence QEEEEACLEEEEEEEDSDEED. Residues 262 to 277 are compositionally biased toward basic and acidic residues; sequence QRSGKDSEAWVPDSEE. Phosphoserine is present on residues serine 275 and serine 337. Residues 324 to 343 are compositionally biased toward acidic residues; it reads ERYFDEEEPEDAPSPELDGD.

In terms of assembly, associates with splicing factor SF3B complex, involved in branch-site recognition.

The protein localises to the nucleus. In terms of biological role, may play a role pre-mRNA splicing through the association with the splicing factor SF3B complex which is involved in branch-site recognition. This chain is Coiled-coil domain-containing protein 97 (CCDC97), found in Homo sapiens (Human).